A 63-amino-acid chain; its full sequence is Large ribosomal subunit protein bL28 (63 aa).

The protein belongs to the bacterial ribosomal protein bL28 family.

The chain is Large ribosomal subunit protein bL28 from Alkaliphilus oremlandii (strain OhILAs) (Clostridium oremlandii (strain OhILAs)).